The following is a 216-amino-acid chain: Octanoyltransferase (216 aa).

The region spanning 34 to 209 (ENTIDEIWLV…KMNQQLDYSH (176 aa)) is the BPL/LPL catalytic domain. Residues 73 to 80 (RGGQITFH), 140 to 142 (SLG), and 153 to 155 (GLA) contribute to the substrate site. Cys-171 acts as the Acyl-thioester intermediate in catalysis.

This sequence belongs to the LipB family.

The protein resides in the cytoplasm. It carries out the reaction octanoyl-[ACP] + L-lysyl-[protein] = N(6)-octanoyl-L-lysyl-[protein] + holo-[ACP] + H(+). It participates in protein modification; protein lipoylation via endogenous pathway; protein N(6)-(lipoyl)lysine from octanoyl-[acyl-carrier-protein]: step 1/2. Its function is as follows. Catalyzes the transfer of endogenously produced octanoic acid from octanoyl-acyl-carrier-protein onto the lipoyl domains of lipoate-dependent enzymes. Lipoyl-ACP can also act as a substrate although octanoyl-ACP is likely to be the physiological substrate. The sequence is that of Octanoyltransferase from Psychromonas ingrahamii (strain DSM 17664 / CCUG 51855 / 37).